Reading from the N-terminus, the 560-residue chain is Diphtheria toxin (560 aa).

An N-terminal signal peptide occupies residues 1–25 (MSRKLFASILIGALLGIGAPPSAHA). NAD(+) is bound by residues His46 and Tyr90. The active site involves Glu173. Intrachain disulfides connect Cys211/Cys226 and Cys486/Cys496.

Homodimer.

The catalysed reaction is diphthamide-[translation elongation factor 2] + NAD(+) = N-(ADP-D-ribosyl)diphthamide-[translation elongation factor 2] + nicotinamide + H(+). Diphtheria toxin, produced by a phage infecting Corynebacterium diphtheriae, is a proenzyme that, after activation, catalyzes the covalent attachment of the ADP ribose moiety of NAD to elongation factor 2. Fragment A is responsible for enzymatic ADP-ribosylation of elongation factor 2, while fragment B is responsible for binding of toxin to cell receptors and entry of fragment A. The protein is Diphtheria toxin of Corynephage omega.